The following is a 285-amino-acid chain: MSTRKQIFLCAINNILSGTCKEDCKFCTQSVRYHADIERYSYKKIGQIVEEARQAKANGALGYCLVTAGKGLDDKKVDFVARAAQAVKAEVEGLNLIACNGTASLEQLIYLKEHGIDSYNHNLETSERYYPEICLTHGWQERYETCENVKSSGLALCSGGIFGMGESMKDREDLLSAIASLQPESTPLNFYHPNPALPIKTRNIGFEEALNIIRRAHTLLGEDRLLMVAGGRELLFNGKEDEMFKAGANSIVIGDYLTTSGSAPKMDQLMLEKLGYEVATSCDSH.

In terms of domain architecture, Radical SAM core spans 2–223 (STRKQIFLCA…RRAHTLLGED (222 aa)). Residues cysteine 20, cysteine 24, and cysteine 27 each contribute to the [4Fe-4S] cluster site. 3 residues coordinate [2Fe-2S] cluster: cysteine 64, cysteine 99, and cysteine 157.

Belongs to the radical SAM superfamily. Biotin synthase family. As to quaternary structure, homodimer. Requires [4Fe-4S] cluster as cofactor. The cofactor is [2Fe-2S] cluster.

It carries out the reaction (4R,5S)-dethiobiotin + (sulfur carrier)-SH + 2 reduced [2Fe-2S]-[ferredoxin] + 2 S-adenosyl-L-methionine = (sulfur carrier)-H + biotin + 2 5'-deoxyadenosine + 2 L-methionine + 2 oxidized [2Fe-2S]-[ferredoxin]. Its pathway is cofactor biosynthesis; biotin biosynthesis; biotin from 7,8-diaminononanoate: step 2/2. Catalyzes the conversion of dethiobiotin (DTB) to biotin by the insertion of a sulfur atom into dethiobiotin via a radical-based mechanism. The sequence is that of Biotin synthase from Sulfurovum sp. (strain NBC37-1).